We begin with the raw amino-acid sequence, 433 residues long: Enolase (433 aa).

A (2R)-2-phosphoglycerate-binding site is contributed by Gln-167. The active-site Proton donor is the Glu-209. Positions 246, 291, and 318 each coordinate Mg(2+). Lys-343, Arg-372, Ser-373, and Lys-394 together coordinate (2R)-2-phosphoglycerate. Catalysis depends on Lys-343, which acts as the Proton acceptor.

It belongs to the enolase family. As to quaternary structure, component of the RNA degradosome, a multiprotein complex involved in RNA processing and mRNA degradation. It depends on Mg(2+) as a cofactor.

It is found in the cytoplasm. Its subcellular location is the secreted. The protein localises to the cell surface. It catalyses the reaction (2R)-2-phosphoglycerate = phosphoenolpyruvate + H2O. The protein operates within carbohydrate degradation; glycolysis; pyruvate from D-glyceraldehyde 3-phosphate: step 4/5. Functionally, catalyzes the reversible conversion of 2-phosphoglycerate (2-PG) into phosphoenolpyruvate (PEP). It is essential for the degradation of carbohydrates via glycolysis. The protein is Enolase of Sodalis glossinidius (strain morsitans).